We begin with the raw amino-acid sequence, 180 residues long: ATP-dependent protease subunit HslV (180 aa).

Residue threonine 7 is part of the active site. Residues glycine 165, cysteine 168, and threonine 171 each coordinate Na(+).

Belongs to the peptidase T1B family. HslV subfamily. In terms of assembly, a double ring-shaped homohexamer of HslV is capped on each side by a ring-shaped HslU homohexamer. The assembly of the HslU/HslV complex is dependent on binding of ATP.

The protein localises to the cytoplasm. The catalysed reaction is ATP-dependent cleavage of peptide bonds with broad specificity.. With respect to regulation, allosterically activated by HslU binding. Functionally, protease subunit of a proteasome-like degradation complex believed to be a general protein degrading machinery. The sequence is that of ATP-dependent protease subunit HslV from Bacillus cereus (strain G9842).